We begin with the raw amino-acid sequence, 384 residues long: Lipid-A-disaccharide synthase (384 aa).

This sequence belongs to the LpxB family.

It carries out the reaction a lipid X + a UDP-2-N,3-O-bis[(3R)-3-hydroxyacyl]-alpha-D-glucosamine = a lipid A disaccharide + UDP + H(+). Its pathway is bacterial outer membrane biogenesis; LPS lipid A biosynthesis. Condensation of UDP-2,3-diacylglucosamine and 2,3-diacylglucosamine-1-phosphate to form lipid A disaccharide, a precursor of lipid A, a phosphorylated glycolipid that anchors the lipopolysaccharide to the outer membrane of the cell. This chain is Lipid-A-disaccharide synthase, found in Geobacter sulfurreducens (strain ATCC 51573 / DSM 12127 / PCA).